A 427-amino-acid polypeptide reads, in one-letter code: 3-phosphoshikimate 1-carboxyvinyltransferase (427 aa).

3-phosphoshikimate contacts are provided by K20, S21, and R25. K20 serves as a coordination point for phosphoenolpyruvate. G92 and R120 together coordinate phosphoenolpyruvate. 3-phosphoshikimate is bound by residues S165, Q167, D313, and K340. Q167 is a binding site for phosphoenolpyruvate. The active-site Proton acceptor is the D313. R344 and R388 together coordinate phosphoenolpyruvate.

The protein belongs to the EPSP synthase family. In terms of assembly, monomer.

Its subcellular location is the cytoplasm. It catalyses the reaction 3-phosphoshikimate + phosphoenolpyruvate = 5-O-(1-carboxyvinyl)-3-phosphoshikimate + phosphate. It participates in metabolic intermediate biosynthesis; chorismate biosynthesis; chorismate from D-erythrose 4-phosphate and phosphoenolpyruvate: step 6/7. Functionally, catalyzes the transfer of the enolpyruvyl moiety of phosphoenolpyruvate (PEP) to the 5-hydroxyl of shikimate-3-phosphate (S3P) to produce enolpyruvyl shikimate-3-phosphate and inorganic phosphate. In Geobacillus kaustophilus (strain HTA426), this protein is 3-phosphoshikimate 1-carboxyvinyltransferase.